We begin with the raw amino-acid sequence, 468 residues long: ATP synthase subunit beta (468 aa).

Residue 155 to 162 (GGAGVGKT) participates in ATP binding.

The protein belongs to the ATPase alpha/beta chains family. As to quaternary structure, F-type ATPases have 2 components, CF(1) - the catalytic core - and CF(0) - the membrane proton channel. CF(1) has five subunits: alpha(3), beta(3), gamma(1), delta(1), epsilon(1). CF(0) has three main subunits: a(1), b(2) and c(9-12). The alpha and beta chains form an alternating ring which encloses part of the gamma chain. CF(1) is attached to CF(0) by a central stalk formed by the gamma and epsilon chains, while a peripheral stalk is formed by the delta and b chains.

Its subcellular location is the cell membrane. The enzyme catalyses ATP + H2O + 4 H(+)(in) = ADP + phosphate + 5 H(+)(out). Produces ATP from ADP in the presence of a proton gradient across the membrane. The catalytic sites are hosted primarily by the beta subunits. The polypeptide is ATP synthase subunit beta (Streptococcus mutans serotype c (strain ATCC 700610 / UA159)).